We begin with the raw amino-acid sequence, 117 residues long: Large ribosomal subunit protein bL20 (117 aa).

The protein belongs to the bacterial ribosomal protein bL20 family.

Its function is as follows. Binds directly to 23S ribosomal RNA and is necessary for the in vitro assembly process of the 50S ribosomal subunit. It is not involved in the protein synthesizing functions of that subunit. This chain is Large ribosomal subunit protein bL20, found in Geobacter sulfurreducens (strain ATCC 51573 / DSM 12127 / PCA).